The sequence spans 89 residues: Acylphosphatase (89 aa).

One can recognise an Acylphosphatase-like domain in the interval 3–89; sequence ALEIYVSGNV…ENYESFEVAY (87 aa). Catalysis depends on residues Arg18 and Asn36.

It belongs to the acylphosphatase family.

It carries out the reaction an acyl phosphate + H2O = a carboxylate + phosphate + H(+). In Archaeoglobus fulgidus (strain ATCC 49558 / DSM 4304 / JCM 9628 / NBRC 100126 / VC-16), this protein is Acylphosphatase (acyP).